The primary structure comprises 312 residues: DNA-directed RNA polymerase subunit alpha (312 aa).

The alpha N-terminal domain (alpha-NTD) stretch occupies residues 1–226 (MIEFEKPKIT…DHLNLFVDLS (226 aa)). The alpha C-terminal domain (alpha-CTD) stretch occupies residues 243 to 312 (TERVLDKIIE…ELGLSLKKRK (70 aa)).

Belongs to the RNA polymerase alpha chain family. As to quaternary structure, homodimer. The RNAP catalytic core consists of 2 alpha, 1 beta, 1 beta' and 1 omega subunit. When a sigma factor is associated with the core the holoenzyme is formed, which can initiate transcription.

The catalysed reaction is RNA(n) + a ribonucleoside 5'-triphosphate = RNA(n+1) + diphosphate. Functionally, DNA-dependent RNA polymerase catalyzes the transcription of DNA into RNA using the four ribonucleoside triphosphates as substrates. This chain is DNA-directed RNA polymerase subunit alpha, found in Lactococcus lactis subsp. lactis (strain IL1403) (Streptococcus lactis).